The chain runs to 292 residues: Acetyl-coenzyme A carboxylase carboxyl transferase subunit beta (292 aa).

The region spanning Val-23–Glu-292 is the CoA carboxyltransferase N-terminal domain. Residues Cys-27, Cys-30, Cys-46, and Cys-49 each contribute to the Zn(2+) site. The C4-type zinc-finger motif lies at Cys-27–Cys-49.

Belongs to the AccD/PCCB family. As to quaternary structure, acetyl-CoA carboxylase is a heterohexamer composed of biotin carboxyl carrier protein (AccB), biotin carboxylase (AccC) and two subunits each of ACCase subunit alpha (AccA) and ACCase subunit beta (AccD). Requires Zn(2+) as cofactor.

The protein resides in the cytoplasm. The enzyme catalyses N(6)-carboxybiotinyl-L-lysyl-[protein] + acetyl-CoA = N(6)-biotinyl-L-lysyl-[protein] + malonyl-CoA. Its pathway is lipid metabolism; malonyl-CoA biosynthesis; malonyl-CoA from acetyl-CoA: step 1/1. In terms of biological role, component of the acetyl coenzyme A carboxylase (ACC) complex. Biotin carboxylase (BC) catalyzes the carboxylation of biotin on its carrier protein (BCCP) and then the CO(2) group is transferred by the transcarboxylase to acetyl-CoA to form malonyl-CoA. The sequence is that of Acetyl-coenzyme A carboxylase carboxyl transferase subunit beta from Idiomarina loihiensis (strain ATCC BAA-735 / DSM 15497 / L2-TR).